The sequence spans 124 residues: Ribonuclease pancreatic (124 aa).

Basic and acidic residues predominate over residues 1–13 (SETAAEKFERQHM). The disordered stretch occupies residues 1–23 (SETAAEKFERQHMDSYSSSSSNS). Substrate-binding residues include lysine 7 and arginine 10. Catalysis depends on histidine 12, which acts as the Proton acceptor. Cystine bridges form between cysteine 26-cysteine 84, cysteine 40-cysteine 95, cysteine 58-cysteine 110, and cysteine 65-cysteine 72. Substrate contacts are provided by residues 41–45 (KPVNT), lysine 66, and arginine 85. Histidine 119 (proton donor) is an active-site residue.

The protein belongs to the pancreatic ribonuclease family. In terms of assembly, monomer. Interacts with and forms tight 1:1 complexes with RNH1. Dimerization of two such complexes may occur. Interaction with RNH1 inhibits this protein. In terms of tissue distribution, pancreas.

The protein resides in the secreted. It catalyses the reaction an [RNA] containing cytidine + H2O = an [RNA]-3'-cytidine-3'-phosphate + a 5'-hydroxy-ribonucleotide-3'-[RNA].. The enzyme catalyses an [RNA] containing uridine + H2O = an [RNA]-3'-uridine-3'-phosphate + a 5'-hydroxy-ribonucleotide-3'-[RNA].. Its function is as follows. Endonuclease that catalyzes the cleavage of RNA on the 3' side of pyrimidine nucleotides. Acts on single-stranded and double-stranded RNA. The protein is Ribonuclease pancreatic (RNASE1) of Camelus bactrianus (Bactrian camel).